The sequence spans 367 residues: 15-cis-zeta-carotene isomerase, chloroplastic (367 aa).

A chloroplast-targeting transit peptide spans 1 to 58 (MAVYHLLLSSPPSLLLLPPSPRRPNLTLIRRIPAHPRLGNSTSLLSSSSPVIRKILVR). A run of 6 helical transmembrane segments spans residues 95-115 (SWVYFGVVLGVVLFILNVVWI), 137-157 (EVAMLMLILIFAIVHSGLASL), 172-192 (VLFAGISLPLAMSTIVYFINH), 211-231 (AIWVANFVSFFFLYPSTFNLL), 269-289 (LWIGNTVAASASLGLIAHHLF), and 339-359 (LPYLAITALTVGAYFAHPLMQ).

In terms of tissue distribution, expressed in leaves and at lower levels in roots.

It is found in the plastid. Its subcellular location is the chloroplast membrane. It catalyses the reaction 9,9',15-tri-cis-zeta-carotene = 9,9'-di-cis-zeta-carotene. Functionally, isomerase involved in the biosynthesis of carotenoids. Catalyzes the cis- to trans-conversion of the 15-cis-bond in 9,15,9'-tri-cis-zeta-carotene. The protein is 15-cis-zeta-carotene isomerase, chloroplastic (Z-ISO) of Arabidopsis thaliana (Mouse-ear cress).